A 226-amino-acid polypeptide reads, in one-letter code: Putative N-acetylmannosamine-6-phosphate 2-epimerase (226 aa).

Belongs to the NanE family.

The enzyme catalyses an N-acyl-D-glucosamine 6-phosphate = an N-acyl-D-mannosamine 6-phosphate. The protein operates within amino-sugar metabolism; N-acetylneuraminate degradation; D-fructose 6-phosphate from N-acetylneuraminate: step 3/5. Functionally, converts N-acetylmannosamine-6-phosphate (ManNAc-6-P) to N-acetylglucosamine-6-phosphate (GlcNAc-6-P). The sequence is that of Putative N-acetylmannosamine-6-phosphate 2-epimerase from Mycoplasma mycoides subsp. mycoides SC (strain CCUG 32753 / NCTC 10114 / PG1).